The primary structure comprises 128 residues: Translation initiation factor 5A (128 aa).

Hypusine is present on Lys35.

The protein belongs to the eIF-5A family.

Its subcellular location is the cytoplasm. In terms of biological role, functions by promoting the formation of the first peptide bond. The polypeptide is Translation initiation factor 5A (eif5a) (Methanosarcina acetivorans (strain ATCC 35395 / DSM 2834 / JCM 12185 / C2A)).